A 197-amino-acid chain; its full sequence is Probable deoxycytidylate deaminase (197 aa).

In terms of domain architecture, CMP/dCMP-type deaminase spans 49-183 (KKHQRFLRIA…KMLDHARLPY (135 aa)). Zn(2+) is bound at residue H117. E119 serves as the catalytic Proton donor. C143 and C146 together coordinate Zn(2+).

The protein belongs to the cytidine and deoxycytidylate deaminase family. It depends on Zn(2+) as a cofactor.

It catalyses the reaction dCMP + H2O + H(+) = dUMP + NH4(+). In terms of biological role, supplies the nucleotide substrate for thymidylate synthetase. In Caenorhabditis elegans, this protein is Probable deoxycytidylate deaminase.